We begin with the raw amino-acid sequence, 538 residues long: Guanine nucleotide-binding protein-like 3 (538 aa).

Residues 1-45 (MKRPKLKKASKRMTCHKRYKIQKKVREHHRKLRKEAKKRGHKKPR) are compositionally biased toward basic residues. Disordered regions lie at residues 1-57 (MKRP…APFK) and 69-126 (QQLE…NPKK). The basic stretch occupies residues 2–46 (KRPKLKKASKRMTCHKRYKIQKKVREHHRKLRKEAKKRGHKKPRK). Residues 54–95 (APFKEALLREAELRKQQLEELKQQQKLDRQKEQERKRKLEVS) are a coiled coil. The segment covering 69 to 93 (QQLEELKQQQKLDRQKEQERKRKLE) has biased composition (basic and acidic residues). Lys79 is modified (N6-acetyllysine). Lys91 participates in a covalent cross-link: Glycyl lysine isopeptide (Lys-Gly) (interchain with G-Cter in SUMO2). Ser95 and Ser101 each carry phosphoserine. Positions 114-126 (RKKAKAGKQNPKK) are enriched in basic residues. The region spanning 129 to 307 (CQELKKVIEA…IIDSPCLIIS (179 aa)) is the CP-type G domain. 176-179 (NKSD) provides a ligand contact to GTP. Glycyl lysine isopeptide (Lys-Gly) (interchain with G-Cter in SUMO2) cross-links involve residues Lys177, Lys248, Lys262, and Lys270. 256–263 (GFPNVGKS) is a GTP binding site. Positions 277 to 451 (VGISMGLTRS…HLTNRILFRS (175 aa)) are intermediate. Residue 300–303 (DSPC) coordinates GTP. The segment covering 460-475 (DEKDIVEESPRQTEDK) has biased composition (basic and acidic residues). An acidic region spans residues 460–532 (DEKDIVEESP…RASQEDETYD (73 aa)). The interval 460–538 (DEKDIVEESP…ETYDFTTDYI (79 aa)) is disordered. Residues Ser493, Ser505, and Ser518 each carry the phosphoserine modification. Residues 506–518 (PEQSTAGKPSDGS) are compositionally biased toward polar residues.

The protein belongs to the TRAFAC class YlqF/YawG GTPase family. Interacts with MDM2; this interaction stabilizes MDM2. Interaction with MDM2 occurs in the nucleoplasm and is triggered by a nucleolar release mechanism, such as mitosis-induced nucleolar disassembly. Indirectly interacts with TP53, via MDM2-binding. Interacts with TSC22D1 isoform 2. As to expression, expressed in the adult bone marrow population that is enriched in hematopoietic stem cells.

Its subcellular location is the nucleus. It is found in the nucleolus. Functionally, may be required to maintain the proliferative capacity of stem cells. Stabilizes MDM2 by preventing its ubiquitination, and hence proteasomal degradation. The protein is Guanine nucleotide-binding protein-like 3 (Gnl3) of Mus musculus (Mouse).